The following is a 387-amino-acid chain: Delta(12)-acyl-lipid-desaturase (387 aa).

Residues 1–31 (MGAGGRMTVPNKWEGEGDEKSQKPVQRVPSA) form a disordered region. Positions 13-22 (WEGEGDEKSQ) are enriched in basic and acidic residues. Helical transmembrane passes span 58–78 (SYVL…TTYI) and 88–108 (AAWP…WVIA). Residues 109–113 (HECGH) carry the Histidine box-1 motif. The helical transmembrane segment at 121-141 (WVDDCVGLVLHSALLVPYFSW) threads the bilayer. A Histidine box-2 motif is present at residues 145-149 (HRRHH). Transmembrane regions (helical) follow at residues 183-203 (VMTL…LNVS), 229-249 (IYIS…IAAA), and 251-271 (GLAW…AFLV). The Histidine box-3 motif lies at 319–323 (HVAHH).

Belongs to the fatty acid desaturase type 1 family.

It localises to the membrane. It participates in lipid metabolism; polyunsaturated fatty acid biosynthesis. Functionally, delta(12)-fatty acid desaturase producing in a heterologous system linoleic acid (18:2(9Z,12Z)) and to a lower extent hexadecadienoic acid (16:2(9Z,12Z)). The sequence is that of Delta(12)-acyl-lipid-desaturase from Punica granatum (Pomegranate).